The sequence spans 265 residues: Phosphatidylglycerol--prolipoprotein diacylglyceryl transferase (265 aa).

Helical transmembrane passes span 17–37, 56–76, 92–112, and 117–137; these read LSIRWYGLMYLIGFAAAWLLG, LVTYMVLGVVVGGRLGYMLFY, WQGGMSFHGGFLGVLAVVWFF, and GKGFWGVADFTAPLAPFGLFA. An a 1,2-diacyl-sn-glycero-3-phospho-(1'-sn-glycerol)-binding site is contributed by Arg139. Transmembrane regions (helical) follow at residues 173 to 193, 201 to 221, and 235 to 255; these read PSQLYEALLEGAALFLIVWLY, GAVSGVFCVCYGLFRFAVELV, and WLTMGQLLSLPVIVFGLWLLA.

This sequence belongs to the Lgt family.

It is found in the cell inner membrane. It carries out the reaction L-cysteinyl-[prolipoprotein] + a 1,2-diacyl-sn-glycero-3-phospho-(1'-sn-glycerol) = an S-1,2-diacyl-sn-glyceryl-L-cysteinyl-[prolipoprotein] + sn-glycerol 1-phosphate + H(+). It functions in the pathway protein modification; lipoprotein biosynthesis (diacylglyceryl transfer). Catalyzes the transfer of the diacylglyceryl group from phosphatidylglycerol to the sulfhydryl group of the N-terminal cysteine of a prolipoprotein, the first step in the formation of mature lipoproteins. The polypeptide is Phosphatidylglycerol--prolipoprotein diacylglyceryl transferase (Solidesulfovibrio magneticus (strain ATCC 700980 / DSM 13731 / RS-1) (Desulfovibrio magneticus)).